The chain runs to 445 residues: Type II methyltransferase M.Bpa9945I (445 aa).

Positions 1–444 constitute an SAM-dependent MTase C5-type domain; that stretch reads MIVIDLFSGA…RAVKDVINGH (444 aa). Cys-136 is a catalytic residue.

This sequence belongs to the class I-like SAM-binding methyltransferase superfamily. C5-methyltransferase family.

It localises to the cytoplasm. The enzyme catalyses a 2'-deoxycytidine in DNA + S-adenosyl-L-methionine = a 5-methyl-2'-deoxycytidine in DNA + S-adenosyl-L-homocysteine + H(+). Component of antiviral defense system DISARM (defense island system associated with restriction-modification), composed of DrmE, DrmA, DrmB, DrmC and DrmMII. DISARM is probably a multi-gene restriction module, this subunit is a DNA methylase. Expression of DISARM in B.subtilis (strain BEST7003) confers resistance to phages Nf, phi29, phi105, phi3T, SPO1, SPR and SPP1. Protection is over 10(7)-fold against phi3T, 10(4)-10(5)-fold against Nf, phi29, phi105 and SPR, 100-fold against SPO1 and 10-fold against SPP1. DISARM does not interfere with phage adsorption, but instead interferes with (phi3T) DNA replication early in its cycle, preventing replication, circularization and lysogeny and probably causes phage DNA degradation (DNA is degraded in SPP1-infected cells). Expression of this methylase alone leads to highly methylated phage, however they are still susceptible to the DISARM system. In terms of biological role, a methylase, recognizes the double-stranded sequence 5'-CCWGG-3', methylates C-2 on both strands. Phage Nf does not have any 5'-CCWGG-3' motifs but is still targeted by the DISARM system. The protein is Type II methyltransferase M.Bpa9945I of Bacillus paralicheniformis (strain ATCC 9945a / NCIMB 11709 / CD-2).